Here is a 534-residue protein sequence, read N- to C-terminus: Kelch repeat and BTB domain-containing protein 4 (534 aa).

The interval 1–25 (MKGGNADSWQREKLASMESPEEPGA) is disordered. Residues 61 to 128 (ADVTISVEGR…IYHGTVKLRA (68 aa)) form the BTB domain. Residues 163–255 (CLQVMWLADR…SLKEIGENVH (93 aa)) enclose the BACK domain. 5 Kelch repeats span residues 255–301 (HIYL…KHGG), 302–344 (DLYV…SVPG), 347–394 (AIYS…NLNG), 396–446 (IYLL…VHKD), and 448–497 (VFIV…VFRD).

Component of the BCR(KBTBD4) E3 ubiquitin ligase complex, at least composed of CUL3, KBTBD4 and RBX1.

Functionally, substrate-specific adapter of a BCR (BTB-CUL3-RBX1) E3 ubiquitin ligase complex which targets CoREST corepressor complex components RCOR1, KDM1A/LSD1 and HDAC2 for proteasomal degradation. RCOR1 is likely to be the primary target while degradation of KDM1A and HDAC2 is likely due to their association with RCOR1. Also targets RCOR3, MIER2 and MIER3 for proteasomal degradation as well as associated proteins ZNF217 and RREB1. Degradation is dependent on the presence of an ELM2 domain in the target proteins. The sequence is that of Kelch repeat and BTB domain-containing protein 4 (KBTBD4) from Homo sapiens (Human).